The following is a 249-amino-acid chain: (S)-1-Phenylethanol dehydrogenase (249 aa).

NAD(+) is bound by residues 17 to 19, Asp38, 61 to 63, Asn89, and Tyr93; these read NGI and CDV. Ser141 contacts substrate. Tyr154 functions as the Proton acceptor in the catalytic mechanism. Residues Lys158, 184–187, and Thr191 each bind NAD(+); that span reads PSLV.

Belongs to the short-chain dehydrogenases/reductases (SDR) family. As to quaternary structure, homotetramer.

The catalysed reaction is (S)-1-phenylethanol + NAD(+) = acetophenone + NADH + H(+). Its function is as follows. Catalyzes the NAD-dependent stereospecific oxidation of (S)-1-phenylethanol to acetophenone in the degradation of ethylbenzene. This chain is (S)-1-Phenylethanol dehydrogenase (ped), found in Aromatoleum aromaticum (strain DSM 19018 / LMG 30748 / EbN1) (Azoarcus sp. (strain EbN1)).